Reading from the N-terminus, the 245-residue chain is 1-(5-phosphoribosyl)-5-[(5-phosphoribosylamino)methylideneamino] imidazole-4-carboxamide isomerase (245 aa).

The active-site Proton acceptor is aspartate 7. The active-site Proton donor is aspartate 129.

It belongs to the HisA/HisF family.

It localises to the cytoplasm. It catalyses the reaction 1-(5-phospho-beta-D-ribosyl)-5-[(5-phospho-beta-D-ribosylamino)methylideneamino]imidazole-4-carboxamide = 5-[(5-phospho-1-deoxy-D-ribulos-1-ylimino)methylamino]-1-(5-phospho-beta-D-ribosyl)imidazole-4-carboxamide. The protein operates within amino-acid biosynthesis; L-histidine biosynthesis; L-histidine from 5-phospho-alpha-D-ribose 1-diphosphate: step 4/9. This is 1-(5-phosphoribosyl)-5-[(5-phosphoribosylamino)methylideneamino] imidazole-4-carboxamide isomerase from Salmonella choleraesuis (strain SC-B67).